The following is an 805-amino-acid chain: Na(+)/H(+) antiporter subunit A1 (805 aa).

The next 20 membrane-spanning stretches (helical) occupy residues 1–21 (MSLL…IPFV), 30–50 (LGWF…SYIS), 79–99 (LGLL…LYSI), 117–137 (LFMG…LYLF), 166–186 (MLVT…LSIA), 201–221 (EIQT…GAMT), 226–246 (FPFY…SAYL), 265–285 (IFAV…ITLF), 300–320 (ILAF…GVGA), 337–357 (FTAA…LFMI), 377–397 (LTIM…MAGI), 427–447 (LGIL…VYSI), 480–500 (ILAI…GSII), 531–551 (LGIY…IYLL), 591–611 (LVII…VTPF), 623–643 (PFEL…IFAK), 646–666 (LFSI…FIFF), 671–691 (LALT…LCFY), 707–727 (LVNI…GLIA), and 766–786 (TLFE…MIKL).

It belongs to the CPA3 antiporters (TC 2.A.63) subunit A family. In terms of assembly, may form a heterooligomeric complex that consists of seven subunits: mnhA1, mnhB1, mnhC1, mnhD1, mnhE1, mnhF1 and mnhG1.

It localises to the cell membrane. Mnh complex is a Na(+)/H(+) antiporter involved in Na(+) excretion. This is Na(+)/H(+) antiporter subunit A1 (mnhA1) from Staphylococcus saprophyticus subsp. saprophyticus (strain ATCC 15305 / DSM 20229 / NCIMB 8711 / NCTC 7292 / S-41).